The primary structure comprises 659 residues: Exoribonuclease 2 (659 aa).

One can recognise an RNB domain in the interval 189-532; it reads REDLTHLYFT…HRLIKQVLSN (344 aa). An S1 motif domain is found at 576-658; it reads NVEFDGEIQD…ETRSVVGDVL (83 aa).

It belongs to the RNR ribonuclease family. RNase II subfamily.

The protein localises to the cytoplasm. It carries out the reaction Exonucleolytic cleavage in the 3'- to 5'-direction to yield nucleoside 5'-phosphates.. Functionally, involved in mRNA degradation. Hydrolyzes single-stranded polyribonucleotides processively in the 3' to 5' direction. This is Exoribonuclease 2 from Glaesserella parasuis serovar 5 (strain SH0165) (Haemophilus parasuis).